Here is a 115-residue protein sequence, read N- to C-terminus: Large ribosomal subunit protein bL20 (115 aa).

The protein belongs to the bacterial ribosomal protein bL20 family.

In terms of biological role, binds directly to 23S ribosomal RNA and is necessary for the in vitro assembly process of the 50S ribosomal subunit. It is not involved in the protein synthesizing functions of that subunit. This Bdellovibrio bacteriovorus (strain ATCC 15356 / DSM 50701 / NCIMB 9529 / HD100) protein is Large ribosomal subunit protein bL20.